The following is a 183-amino-acid chain: RNA 2',3'-cyclic phosphodiesterase (183 aa).

The active-site Proton donor is H44. 2 consecutive short sequence motifs (HXTX) follow at residues 44-47 (HITL) and 130-133 (HMTL). H130 serves as the catalytic Proton acceptor.

Belongs to the 2H phosphoesterase superfamily. ThpR family.

It carries out the reaction a 3'-end 2',3'-cyclophospho-ribonucleotide-RNA + H2O = a 3'-end 2'-phospho-ribonucleotide-RNA + H(+). Hydrolyzes RNA 2',3'-cyclic phosphodiester to an RNA 2'-phosphomonoester. In Bacillus subtilis (strain 168), this protein is RNA 2',3'-cyclic phosphodiesterase (ytlP).